We begin with the raw amino-acid sequence, 156 residues long: ATP synthase subunit b (156 aa).

Residues 7-27 traverse the membrane as a helical segment; that stretch reads LFVQAIVFAILVWFTMKFVWP.

It belongs to the ATPase B chain family. F-type ATPases have 2 components, F(1) - the catalytic core - and F(0) - the membrane proton channel. F(1) has five subunits: alpha(3), beta(3), gamma(1), delta(1), epsilon(1). F(0) has three main subunits: a(1), b(2) and c(10-14). The alpha and beta chains form an alternating ring which encloses part of the gamma chain. F(1) is attached to F(0) by a central stalk formed by the gamma and epsilon chains, while a peripheral stalk is formed by the delta and b chains.

It localises to the cell inner membrane. F(1)F(0) ATP synthase produces ATP from ADP in the presence of a proton or sodium gradient. F-type ATPases consist of two structural domains, F(1) containing the extramembraneous catalytic core and F(0) containing the membrane proton channel, linked together by a central stalk and a peripheral stalk. During catalysis, ATP synthesis in the catalytic domain of F(1) is coupled via a rotary mechanism of the central stalk subunits to proton translocation. Functionally, component of the F(0) channel, it forms part of the peripheral stalk, linking F(1) to F(0). This is ATP synthase subunit b from Polaromonas sp. (strain JS666 / ATCC BAA-500).